A 324-amino-acid chain; its full sequence is tRNA-cytidine(32) 2-sulfurtransferase (324 aa).

The tract at residues 1–26 (MQDLIDSPTAARTPAEEKIRHEGNKL) is disordered. The span at 14–26 (PAEEKIRHEGNKL) shows a compositional bias: basic and acidic residues. Positions 55 to 60 (SGGKDS) match the PP-loop motif motif. [4Fe-4S] cluster-binding residues include Cys130, Cys133, and Cys221. Positions 278-310 (RPDANGDTAFDPIDPEDPREDAGDACASSPADG) are disordered.

The protein belongs to the TtcA family. Homodimer. Mg(2+) is required as a cofactor. [4Fe-4S] cluster serves as cofactor.

Its subcellular location is the cytoplasm. The catalysed reaction is cytidine(32) in tRNA + S-sulfanyl-L-cysteinyl-[cysteine desulfurase] + AH2 + ATP = 2-thiocytidine(32) in tRNA + L-cysteinyl-[cysteine desulfurase] + A + AMP + diphosphate + H(+). The protein operates within tRNA modification. Its function is as follows. Catalyzes the ATP-dependent 2-thiolation of cytidine in position 32 of tRNA, to form 2-thiocytidine (s(2)C32). The sulfur atoms are provided by the cysteine/cysteine desulfurase (IscS) system. In Bordetella petrii (strain ATCC BAA-461 / DSM 12804 / CCUG 43448), this protein is tRNA-cytidine(32) 2-sulfurtransferase.